We begin with the raw amino-acid sequence, 205 residues long: Nitrophorin-4 (205 aa).

Residues 1–21 (MKSYTSLLAVAILCLFGGVNG) form the signal peptide. Disulfide bonds link Cys23–Cys143 and Cys62–Cys192. Heme is bound at residue His80.

It belongs to the calycin superfamily. Nitrophorin family. Heme b is required as a cofactor. In terms of tissue distribution, salivary gland (at protein level).

It localises to the secreted. It catalyses the reaction 3 nitrite + 2 H(+) = 2 nitric oxide + nitrate + H2O. Heme-based protein that delivers nitric oxide gas (NO) to the victim while feeding, resulting in vasodilation and inhibition of platelet aggregation. Reversibly binds nitric oxide (NO). Also binds tightly to histamine, which is released by the host to induce wound healing. NO release is pH dependent and linked to loop dynamics. The polypeptide is Nitrophorin-4 (Rhodnius prolixus (Triatomid bug)).